The following is a 300-amino-acid chain: Bidirectional sugar transporter SWEET12 (300 aa).

Over 1–4 (MVQA) the chain is Extracellular. The chain crosses the membrane as a helical span at residues 5-25 (LVFAVGIVGNILSFLVILAPV). The 85-residue stretch at 8 to 92 (AVGIVGNILS…TVYLLYAPRQ (85 aa)) folds into the MtN3/slv 1 domain. The Cytoplasmic segment spans residues 26 to 38 (PTFYRVYKKKSTE). Residues 39–61 (SFQSVPYAVALLSAMLWLYYALL) traverse the membrane as a helical segment. Topologically, residues 62-67 (TSDLLL) are extracellular. A helical transmembrane segment spans residues 68-88 (LSINSIGCLVESLYLTVYLLY). The Cytoplasmic portion of the chain corresponds to 89 to 99 (APRQAMAFTLK). Residues 100–120 (LVCAMNLALFAAVVAALQLLV) traverse the membrane as a helical segment. Residues 121–128 (KATDRRVT) are Extracellular-facing. The chain crosses the membrane as a helical span at residues 129 to 149 (LAGGIGASFALAVFVAPLTII). Positions 131 to 213 (GGIGASFALA…VLYVVYKNPK (83 aa)) constitute a MtN3/slv 2 domain. At 150 to 162 (RQVIRTKSVEFMP) the chain is on the cytoplasmic side. A helical transmembrane segment spans residues 163–183 (FWLSFFLTLSAVVWFFYGLLM). Over 184–185 (KD) the chain is Extracellular. A helical membrane pass occupies residues 186 to 206 (FFVATPNVLGLLFGLAQMVLY). Topologically, residues 207 to 300 (VVYKNPKKNS…PPALPAVEVA (94 aa)) are cytoplasmic. The segment at 256-300 (ADLEAAAPATPQRPADDDAIDHRSVVVDIPPPPQPPPALPAVEVA) is disordered. The span at 269 to 280 (PADDDAIDHRSV) shows a compositional bias: basic and acidic residues. The span at 284 to 294 (IPPPPQPPPAL) shows a compositional bias: pro residues.

Belongs to the SWEET sugar transporter family. In terms of assembly, forms homooligomers and/or heterooligomers.

The protein resides in the cell membrane. Functionally, mediates both low-affinity uptake and efflux of sugar across the plasma membrane. In terms of biological role, confers blight susceptibility. Confers TAL effector-mediated susceptibility to Xanthomonas oryzae pv. oryzae. This Oryza sativa subsp. japonica (Rice) protein is Bidirectional sugar transporter SWEET12 (SWEET12).